Reading from the N-terminus, the 322-residue chain is Adenine deaminase (322 aa).

Residues His-11, His-13, and His-189 each coordinate Zn(2+). Residue Glu-192 is the Proton donor of the active site. A Zn(2+)-binding site is contributed by Asp-270. Asp-271 serves as a coordination point for substrate.

Belongs to the metallo-dependent hydrolases superfamily. Adenosine and AMP deaminases family. Adenine deaminase type 2 subfamily. The cofactor is Zn(2+).

It catalyses the reaction adenine + H2O + H(+) = hypoxanthine + NH4(+). Functionally, catalyzes the hydrolytic deamination of adenine to hypoxanthine. Plays an important role in the purine salvage pathway and in nitrogen catabolism. The sequence is that of Adenine deaminase from Rhizobium leguminosarum bv. trifolii (strain WSM2304).